The following is a 511-amino-acid chain: Neuronal acetylcholine receptor subunit alpha-2 (511 aa).

Residues 1–27 (MTLSHSALQFWTHLYLWCLLLVPAVLT) form the signal peptide. Over 28–241 (QQGSHTHAED…VTYYFVIRRL (214 aa)) the chain is Extracellular. N-linked (GlcNAc...) asparagine glycans are attached at residues N56 and N106. Residues C160 and C174 are joined by a disulfide bond. Residue N212 is glycosylated (N-linked (GlcNAc...) asparagine). A disulfide bridge links C224 with C225. 3 helical membrane-spanning segments follow: residues 242-266 (PLFY…VFYL), 274-292 (ITLC…LLIT), and 308-329 (YLLF…VLNV). The Cytoplasmic portion of the chain corresponds to 330 to 484 (HHRSPSTHNM…WKYVAMVVDR (155 aa)). A helical membrane pass occupies residues 485 to 503 (IFLWLFIIVCFLGTIGLFL).

Belongs to the ligand-gated ion channel (TC 1.A.9) family. Acetylcholine receptor (TC 1.A.9.1) subfamily. Alpha-2/CHRNA2 sub-subfamily. As to quaternary structure, neuronal AChR seems to be composed of two different types of subunits: alpha and non-alpha (beta). CHRNA2/Alpha-2 subunit can be combined to CHRNB2/beta-2 or CHRNB4/beta-4 to give rise to functional receptors. The alpha-2:beta-2 nAChR complex is proposed to be a heteropentamer with two subtypes: LS (low agonist sensitivity) with a (alpha-2)3:(beta-2)2 and HS (high agonist sensitivity) with a (alpha-2)2:(beta-2)3 stoichiometry; the subtypes differ in their subunit binding interfaces which are involved in ligand binding.

The protein localises to the synaptic cell membrane. Its subcellular location is the cell membrane. It catalyses the reaction Ca(2+)(in) = Ca(2+)(out). The catalysed reaction is K(+)(in) = K(+)(out). The enzyme catalyses Na(+)(in) = Na(+)(out). Functionally, component of neuronal acetylcholine receptors (nAChRs) that function as pentameric, ligand-gated cation channels with high calcium permeability among other activities. nAChRs are excitatory neurotrasnmitter receptors formed by a collection of nAChR subunits known to mediate synaptic transmission in the nervous system and the neuromuscular junction. Each nAchR subunit confers differential attributes to channel properties, including activation, deactivation and desensitization kinetics, pH sensitivity, cation permeability, and binding to allosteric modulators. CHRNA2 forms heteropentameric neuronal acetylcholine receptors with CHRNB2 and CHRNB4 and plays a role in nicotine dependence. This chain is Neuronal acetylcholine receptor subunit alpha-2 (Chrna2), found in Rattus norvegicus (Rat).